The chain runs to 468 residues: Methylenetetrahydrofolate--tRNA-(uracil-5-)-methyltransferase TrmFO (468 aa).

Position 13–18 (13–18) interacts with FAD; it reads GGGLAG.

The protein belongs to the MnmG family. TrmFO subfamily. FAD is required as a cofactor.

The protein localises to the cytoplasm. The enzyme catalyses uridine(54) in tRNA + (6R)-5,10-methylene-5,6,7,8-tetrahydrofolate + NADH + H(+) = 5-methyluridine(54) in tRNA + (6S)-5,6,7,8-tetrahydrofolate + NAD(+). It carries out the reaction uridine(54) in tRNA + (6R)-5,10-methylene-5,6,7,8-tetrahydrofolate + NADPH + H(+) = 5-methyluridine(54) in tRNA + (6S)-5,6,7,8-tetrahydrofolate + NADP(+). Its function is as follows. Catalyzes the folate-dependent formation of 5-methyl-uridine at position 54 (M-5-U54) in all tRNAs. The chain is Methylenetetrahydrofolate--tRNA-(uracil-5-)-methyltransferase TrmFO from Bartonella henselae (strain ATCC 49882 / DSM 28221 / CCUG 30454 / Houston 1) (Rochalimaea henselae).